Consider the following 233-residue polypeptide: Large ribosomal subunit protein uL1 (233 aa).

Belongs to the universal ribosomal protein uL1 family. As to quaternary structure, part of the 50S ribosomal subunit.

In terms of biological role, binds directly to 23S rRNA. The L1 stalk is quite mobile in the ribosome, and is involved in E site tRNA release. Its function is as follows. Protein L1 is also a translational repressor protein, it controls the translation of the L11 operon by binding to its mRNA. In Syntrophotalea carbinolica (strain DSM 2380 / NBRC 103641 / GraBd1) (Pelobacter carbinolicus), this protein is Large ribosomal subunit protein uL1.